A 637-amino-acid polypeptide reads, in one-letter code: Probable ATP-binding protein YheS (637 aa).

ABC transporter domains lie at 2–246 (IVFS…AQQQ) and 313–527 (LKME…KQEN). ATP contacts are provided by residues 34 to 41 (GKNGCGKS) and 345 to 352 (GRNGAGKS). Residues 523–559 (QKQENQTDEAPKENANSAQARKDQKRREAELRAQTQP) form a disordered region. Basic and acidic residues predominate over residues 542-553 (ARKDQKRREAEL).

It belongs to the ABC transporter superfamily. ABCF family. YheS subfamily.

Genetic data indicate it may be involved in ribosome assembly or function. Ectopic expression exacerbates the cold-sensitive growth phenotype of a bipA deletion. This is Probable ATP-binding protein YheS (yheS) from Escherichia coli O6:H1 (strain CFT073 / ATCC 700928 / UPEC).